Reading from the N-terminus, the 512-residue chain is Sodium/proline symporter (512 aa).

Transmembrane regions (helical) follow at residues 16–36 (WQTY…GFYG), 54–74 (IGPY…WMIM), 85–105 (LSAM…YFVV), 139–159 (IISG…GFVS), 174–194 (FGLI…GYLA), 200–220 (FFQG…AMMN), 240–260 (LFKG…LGYF), 286–306 (ISWM…GIAF), 327–347 (VLFH…AIMS), 381–401 (FVMI…AIAW), 410–430 (LVGN…LFAL), 438–458 (AGAV…IAWI), and 467–487 (IFGL…TYVV).

Belongs to the sodium:solute symporter (SSF) (TC 2.A.21) family.

Its subcellular location is the cell membrane. The catalysed reaction is L-proline(in) + Na(+)(in) = L-proline(out) + Na(+)(out). Catalyzes the sodium-dependent uptake of extracellular L-proline. Since most S.aureus strains are L-proline auxotrophs, this transporter may aid the bacterial persistence during an infection of tissues with low proline concentrations. This Staphylococcus aureus (strain Newman) protein is Sodium/proline symporter (putP).